Here is a 276-residue protein sequence, read N- to C-terminus: NADPH-dependent 7-cyano-7-deazaguanine reductase (276 aa).

Residue 83–85 (IES) coordinates substrate. 85 to 86 (SK) contacts NADPH. C184 (thioimide intermediate) is an active-site residue. D191 acts as the Proton donor in catalysis. 223-224 (HE) is a binding site for substrate. 252-253 (RG) lines the NADPH pocket.

Belongs to the GTP cyclohydrolase I family. QueF type 2 subfamily. In terms of assembly, homodimer.

It is found in the cytoplasm. It catalyses the reaction 7-aminomethyl-7-carbaguanine + 2 NADP(+) = 7-cyano-7-deazaguanine + 2 NADPH + 3 H(+). Its pathway is tRNA modification; tRNA-queuosine biosynthesis. Catalyzes the NADPH-dependent reduction of 7-cyano-7-deazaguanine (preQ0) to 7-aminomethyl-7-deazaguanine (preQ1). In Pseudomonas syringae pv. syringae (strain B728a), this protein is NADPH-dependent 7-cyano-7-deazaguanine reductase.